The following is a 687-amino-acid chain: Polyphosphate kinase (687 aa).

Asn-45 serves as a coordination point for ATP. Mg(2+) is bound by residues Arg-375 and Arg-405. The active-site Phosphohistidine intermediate is the His-435. Residues Tyr-472, Arg-568, and His-596 each coordinate ATP.

Belongs to the polyphosphate kinase 1 (PPK1) family. It depends on Mg(2+) as a cofactor. Post-translationally, an intermediate of this reaction is the autophosphorylated ppk in which a phosphate is covalently linked to a histidine residue through a N-P bond.

The enzyme catalyses [phosphate](n) + ATP = [phosphate](n+1) + ADP. Catalyzes the reversible transfer of the terminal phosphate of ATP to form a long-chain polyphosphate (polyP). This chain is Polyphosphate kinase, found in Paraburkholderia phytofirmans (strain DSM 17436 / LMG 22146 / PsJN) (Burkholderia phytofirmans).